A 355-amino-acid polypeptide reads, in one-letter code: Capsid protein VP1/VP2 (355 aa).

The segment covering 1-21 has biased composition (basic and acidic residues); the sequence is MADSTTMEHDGRGTKRKREAD. The segment at 1–41 is disordered; it reads MADSTTMEHDGRGTKRKREADGGSGQGVGKGNSNAVKEGYG.

The protein belongs to the parvoviridae capsid protein family.

Its subcellular location is the virion. Functionally, capsid protein self-assembles to form an icosahedral capsid with a T=1 symmetry, about 22 nm in diameter, and consisting of 60 copies of size variants of the capsid proteins, which differ in the N-terminushe capsid encapsulates the genomic ssDNA. Capsid proteins are responsible for the attachment to host cell receptors. This attachment induces virion internalization predominantly through clathrin-dependent endocytosis. The polypeptide is Capsid protein VP1/VP2 (VP) (Aedes albopictus densovirus (isolate Boublik/1994) (AalDNV)).